The following is a 339-amino-acid chain: Phenylalanine--tRNA ligase alpha subunit (339 aa).

Mg(2+) is bound at residue Glu-254.

This sequence belongs to the class-II aminoacyl-tRNA synthetase family. Phe-tRNA synthetase alpha subunit type 1 subfamily. Tetramer of two alpha and two beta subunits. It depends on Mg(2+) as a cofactor.

It localises to the cytoplasm. It carries out the reaction tRNA(Phe) + L-phenylalanine + ATP = L-phenylalanyl-tRNA(Phe) + AMP + diphosphate + H(+). The sequence is that of Phenylalanine--tRNA ligase alpha subunit from Caldanaerobacter subterraneus subsp. tengcongensis (strain DSM 15242 / JCM 11007 / NBRC 100824 / MB4) (Thermoanaerobacter tengcongensis).